Here is a 235-residue protein sequence, read N- to C-terminus: Large ribosomal subunit protein uL1 (235 aa).

It belongs to the universal ribosomal protein uL1 family. In terms of assembly, part of the 50S ribosomal subunit.

Its function is as follows. Binds directly to 23S rRNA. The L1 stalk is quite mobile in the ribosome, and is involved in E site tRNA release. Functionally, protein L1 is also a translational repressor protein, it controls the translation of the L11 operon by binding to its mRNA. This is Large ribosomal subunit protein uL1 from Synechococcus sp. (strain CC9605).